We begin with the raw amino-acid sequence, 372 residues long: 4-hydroxy-3-methylbut-2-en-1-yl diphosphate synthase (flavodoxin) (372 aa).

[4Fe-4S] cluster contacts are provided by cysteine 270, cysteine 273, cysteine 305, and glutamate 312.

Belongs to the IspG family. Requires [4Fe-4S] cluster as cofactor.

The catalysed reaction is (2E)-4-hydroxy-3-methylbut-2-enyl diphosphate + oxidized [flavodoxin] + H2O + 2 H(+) = 2-C-methyl-D-erythritol 2,4-cyclic diphosphate + reduced [flavodoxin]. It participates in isoprenoid biosynthesis; isopentenyl diphosphate biosynthesis via DXP pathway; isopentenyl diphosphate from 1-deoxy-D-xylulose 5-phosphate: step 5/6. Converts 2C-methyl-D-erythritol 2,4-cyclodiphosphate (ME-2,4cPP) into 1-hydroxy-2-methyl-2-(E)-butenyl 4-diphosphate. The protein is 4-hydroxy-3-methylbut-2-en-1-yl diphosphate synthase (flavodoxin) of Enterobacter sp. (strain 638).